The primary structure comprises 95 residues: uncharacterized protein (95 aa).

A helical membrane pass occupies residues 12-32 (IASLVVSVVVLLIGLILWFFI).

It localises to the cell membrane. This is an uncharacterized protein from Escherichia coli O157:H7.